Consider the following 100-residue polypeptide: Integration host factor subunit beta (100 aa).

The protein belongs to the bacterial histone-like protein family. In terms of assembly, heterodimer of an alpha and a beta chain.

Its function is as follows. This protein is one of the two subunits of integration host factor, a specific DNA-binding protein that functions in genetic recombination as well as in transcriptional and translational control. The polypeptide is Integration host factor subunit beta (Agrobacterium fabrum (strain C58 / ATCC 33970) (Agrobacterium tumefaciens (strain C58))).